Here is a 392-residue protein sequence, read N- to C-terminus: S-adenosylmethionine synthase (392 aa).

H20 is an ATP binding site. D22 provides a ligand contact to Mg(2+). E48 is a K(+) binding site. Residues E61 and Q106 each contribute to the L-methionine site. Positions 106-116 are flexible loop; the sequence is QSRDIINAIEK. ATP contacts are provided by residues 171–173, D248, 254–255, A271, and K275; these read DSK and RK. An L-methionine-binding site is contributed by D248. K279 is a binding site for L-methionine.

The protein belongs to the AdoMet synthase family. As to quaternary structure, homotetramer; dimer of dimers. It depends on Mg(2+) as a cofactor. K(+) is required as a cofactor.

The protein resides in the cytoplasm. It carries out the reaction L-methionine + ATP + H2O = S-adenosyl-L-methionine + phosphate + diphosphate. The protein operates within amino-acid biosynthesis; S-adenosyl-L-methionine biosynthesis; S-adenosyl-L-methionine from L-methionine: step 1/1. Catalyzes the formation of S-adenosylmethionine (AdoMet) from methionine and ATP. The overall synthetic reaction is composed of two sequential steps, AdoMet formation and the subsequent tripolyphosphate hydrolysis which occurs prior to release of AdoMet from the enzyme. This Borreliella burgdorferi (strain ATCC 35210 / DSM 4680 / CIP 102532 / B31) (Borrelia burgdorferi) protein is S-adenosylmethionine synthase.